Consider the following 293-residue polypeptide: B1-hordein (293 aa).

A signal peptide spans 1 to 19 (MKTFLIFALLAIAATSTIA). Residues 20–90 (QQQPFPQQPI…PPFWQQKPFP (71 aa)) form a disordered region. Pro residues predominate over residues 25–81 (PQQPIPQQPQPYPQQPQPYPQQPFPPQQPFPQQPVPQQPQPYPQQPFPPQQPFPQQP).

Belongs to the gliadin/glutenin family. In terms of tissue distribution, developing endosperm.

Its function is as follows. Sulfur-rich seed storage protein. This Hordeum vulgare (Barley) protein is B1-hordein.